Here is a 101-residue protein sequence, read N- to C-terminus: Chaperone modulatory protein CbpM (101 aa).

This sequence belongs to the CbpM family.

In terms of biological role, interacts with CbpA and inhibits both the DnaJ-like co-chaperone activity and the DNA binding activity of CbpA. Together with CbpA, modulates the activity of the DnaK chaperone system. Does not inhibit the co-chaperone activity of DnaJ. This is Chaperone modulatory protein CbpM from Escherichia coli O1:K1 / APEC.